The primary structure comprises 507 residues: Maturase K (507 aa).

The protein belongs to the intron maturase 2 family. MatK subfamily.

Its subcellular location is the plastid. It localises to the chloroplast. Usually encoded in the trnK tRNA gene intron. Probably assists in splicing its own and other chloroplast group II introns. In Kalmia procumbens (Alpine azalea), this protein is Maturase K.